The chain runs to 96 residues: Ferredoxin-1 (96 aa).

The 2Fe-2S ferredoxin-type domain occupies M1–E95. Positions 34, 39, 42, and 78 each coordinate [2Fe-2S] cluster. C52 and C87 are oxidised to a cystine.

This sequence belongs to the 2Fe2S plant-type ferredoxin family. [2Fe-2S] cluster is required as a cofactor.

Its function is as follows. Ferredoxins are iron-sulfur proteins that transfer electrons in a wide variety of metabolic reactions. The sequence is that of Ferredoxin-1 (fdx1) from Aquifex aeolicus (strain VF5).